The primary structure comprises 212 residues: uncharacterized protein (212 aa).

Pentapeptide repeat domains follow at residues V63–G102, M103–Q142, and S143–Q182.

This is an uncharacterized protein from Bacillus subtilis (strain 168).